A 426-amino-acid polypeptide reads, in one-letter code: Serine--tRNA ligase (426 aa).

233–235 is a binding site for L-serine; the sequence is TAE. 264 to 266 is an ATP binding site; it reads RSE. An L-serine-binding site is contributed by E287. 351 to 354 serves as a coordination point for ATP; it reads EISS. L-serine is bound at residue S387.

Belongs to the class-II aminoacyl-tRNA synthetase family. Type-1 seryl-tRNA synthetase subfamily. Homodimer. The tRNA molecule binds across the dimer.

The protein localises to the cytoplasm. The enzyme catalyses tRNA(Ser) + L-serine + ATP = L-seryl-tRNA(Ser) + AMP + diphosphate + H(+). It carries out the reaction tRNA(Sec) + L-serine + ATP = L-seryl-tRNA(Sec) + AMP + diphosphate + H(+). It functions in the pathway aminoacyl-tRNA biosynthesis; selenocysteinyl-tRNA(Sec) biosynthesis; L-seryl-tRNA(Sec) from L-serine and tRNA(Sec): step 1/1. Its function is as follows. Catalyzes the attachment of serine to tRNA(Ser). Is also able to aminoacylate tRNA(Sec) with serine, to form the misacylated tRNA L-seryl-tRNA(Sec), which will be further converted into selenocysteinyl-tRNA(Sec). The chain is Serine--tRNA ligase from Clostridium tetani (strain Massachusetts / E88).